We begin with the raw amino-acid sequence, 310 residues long: uncharacterized protein (310 aa).

3 disordered regions span residues 1 to 53 (MSNK…NKEM), 78 to 127 (PIEN…TITN), and 153 to 217 (QQPL…SQML). Residues 11–25 (GEEDEEEDDLYDDYD) are compositionally biased toward acidic residues. Polar residues-rich tracts occupy residues 37–49 (STSM…NISL) and 78–88 (PIENINENPSP). Low complexity-rich tracts occupy residues 94 to 126 (QTQQ…TTIT), 164 to 184 (PSPI…QYIT), and 192 to 208 (YQPI…QIPT). The stretch at 268–299 (DLIKSVQHNIRQYNDDILTLEEKLEQTEWSLQ) forms a coiled coil.

This is an uncharacterized protein from Dictyostelium discoideum (Social amoeba).